A 547-amino-acid chain; its full sequence is TBCC domain-containing protein 1 (547 aa).

Residues Pro-304–Leu-435 enclose the C-CAP/cofactor C-like domain.

Belongs to the TBCC family.

The protein resides in the cytoplasm. Its subcellular location is the cytoskeleton. The protein localises to the microtubule organizing center. It localises to the centrosome. It is found in the spindle pole. Its function is as follows. May play a role in the regulation of centrosome and Golgi apparatus positioning. The sequence is that of TBCC domain-containing protein 1 (tbccd1) from Xenopus tropicalis (Western clawed frog).